The primary structure comprises 274 residues: MNEHHQPFEEIKLINANGAEQWSARQLGKLLGYSEYRHFIPVLTRAKEACENSGHTIDDHFEEILDMVKIGSNAKRALKDIVLSRYACYLVVQNGDPAKPVIAAGQTYFAIQTRRQELADDEAFKQLREDEKRLFLRNELKEHNKQLVEAAQQAGVATATDFAIFQNHGYQGLYGGLDQKAIHQRKGLKKNQKILDHMGSTELAANLFRATQTEEKLKRDGVNSKQQANTTHFDVGRKVRQTIQELGGTMPEELPTPQVSIKQLENSVKITEKK.

This is DNA damage-inducible protein D (dinD) from Escherichia coli (strain K12).